Consider the following 127-residue polypeptide: Riboflavin kinase (127 aa).

10–15 lines the CDP pocket; it reads GLGEGR. 2 residues coordinate Mg(2+): Thr39 and Asn41. Residues Thr96 and Glu104 each coordinate FMN. Position 109–112 (109–112) interacts with CDP; it reads VHLR.

Belongs to the archaeal riboflavin kinase family. Mg(2+) serves as cofactor.

It carries out the reaction riboflavin + CTP = CDP + FMN + H(+). It participates in cofactor biosynthesis; FMN biosynthesis; FMN from riboflavin (CTP route): step 1/1. Its function is as follows. Catalyzes the CTP-dependent phosphorylation of riboflavin (vitamin B2) to form flavin mononucleotide (FMN). This chain is Riboflavin kinase, found in Methanococcus maripaludis (strain C7 / ATCC BAA-1331).